The following is a 921-amino-acid chain: Protein translocase subunit SecA (921 aa).

ATP-binding positions include Gln-86, Gly-104 to Thr-108, and Asp-497. Residues Gln-829–Gln-838 are compositionally biased toward low complexity. The segment at Gln-829 to Ala-921 is disordered. Over residues Val-839 to Pro-855 the composition is skewed to pro residues. Zn(2+) is bound by residues Cys-901, Cys-903, Cys-912, and His-913.

It belongs to the SecA family. Monomer and homodimer. Part of the essential Sec protein translocation apparatus which comprises SecA, SecYEG and auxiliary proteins SecDF-YajC and YidC. It depends on Zn(2+) as a cofactor.

Its subcellular location is the cell inner membrane. The protein localises to the cytoplasm. The catalysed reaction is ATP + H2O + cellular proteinSide 1 = ADP + phosphate + cellular proteinSide 2.. Part of the Sec protein translocase complex. Interacts with the SecYEG preprotein conducting channel. Has a central role in coupling the hydrolysis of ATP to the transfer of proteins into and across the cell membrane, serving both as a receptor for the preprotein-SecB complex and as an ATP-driven molecular motor driving the stepwise translocation of polypeptide chains across the membrane. This chain is Protein translocase subunit SecA, found in Hyphomonas neptunium (strain ATCC 15444).